The sequence spans 386 residues: Succinate--CoA ligase [ADP-forming] subunit beta (386 aa).

The 236-residue stretch at 9–244 (KAVLRSYGVS…LDEEDSKEIE (236 aa)) folds into the ATP-grasp domain. Residues K46, 53 to 55 (GRG), E99, C102, and E107 contribute to the ATP site. Mg(2+)-binding residues include N199 and D213. Residues N264 and 321–323 (GIM) contribute to the substrate site.

It belongs to the succinate/malate CoA ligase beta subunit family. Heterotetramer of two alpha and two beta subunits. Requires Mg(2+) as cofactor.

The enzyme catalyses succinate + ATP + CoA = succinyl-CoA + ADP + phosphate. The catalysed reaction is GTP + succinate + CoA = succinyl-CoA + GDP + phosphate. It participates in carbohydrate metabolism; tricarboxylic acid cycle; succinate from succinyl-CoA (ligase route): step 1/1. Functionally, succinyl-CoA synthetase functions in the citric acid cycle (TCA), coupling the hydrolysis of succinyl-CoA to the synthesis of either ATP or GTP and thus represents the only step of substrate-level phosphorylation in the TCA. The beta subunit provides nucleotide specificity of the enzyme and binds the substrate succinate, while the binding sites for coenzyme A and phosphate are found in the alpha subunit. This chain is Succinate--CoA ligase [ADP-forming] subunit beta, found in Bacillus cereus (strain B4264).